A 227-amino-acid polypeptide reads, in one-letter code: Cytidylate kinase (227 aa).

12-20 lines the ATP pocket; it reads GPSGAGKGT.

This sequence belongs to the cytidylate kinase family. Type 1 subfamily.

The protein localises to the cytoplasm. It carries out the reaction CMP + ATP = CDP + ADP. It catalyses the reaction dCMP + ATP = dCDP + ADP. This chain is Cytidylate kinase, found in Salmonella paratyphi A (strain ATCC 9150 / SARB42).